A 758-amino-acid polypeptide reads, in one-letter code: Actin filament-associated protein 1-like 1 (758 aa).

The disordered stretch occupies residues 91–194 (YRDSSENLSC…YESYDEEDEE (104 aa)). Over residues 102 to 120 (LPPPPSAPPPPLPTTPPPE) the composition is skewed to pro residues. Residues 137–148 (YITSRNSSSPPN) are compositionally biased toward polar residues. Residues 177-186 (ESDGLSSSYE) are compositionally biased toward low complexity. The PH 1 domain occupies 216–312 (DSRICAFLLR…WLRVIKEVIS (97 aa)). The interval 335 to 369 (SHDKTSDSDSAANGENSSLSSGKENRDTGKCRKGG) is disordered. Positions 342–356 (SDSAANGENSSLSSG) are enriched in polar residues. Residues 409–503 (EVPCCGYLSV…WLGLLLAQTG (95 aa)) enclose the PH 2 domain. Positions 602 to 690 (KTRAEEDARK…TEVKENLKKS (89 aa)) form a coiled coil. Positions 692-758 (AGGPTLGLAV…KAKEWEKKKP (67 aa)) are disordered. Over residues 749–758 (KAKEWEKKKP) the composition is skewed to basic and acidic residues.

Its subcellular location is the cytoplasm. It localises to the cell projection. The protein resides in the podosome. The protein localises to the invadopodium. It is found in the cytoskeleton. Its subcellular location is the stress fiber. In terms of biological role, may be involved in podosome and invadosome formation. This Xenopus tropicalis (Western clawed frog) protein is Actin filament-associated protein 1-like 1 (afap1l1).